The primary structure comprises 459 residues: Exodeoxyribonuclease 7 large subunit (459 aa).

It belongs to the XseA family. Heterooligomer composed of large and small subunits.

Its subcellular location is the cytoplasm. The enzyme catalyses Exonucleolytic cleavage in either 5'- to 3'- or 3'- to 5'-direction to yield nucleoside 5'-phosphates.. Bidirectionally degrades single-stranded DNA into large acid-insoluble oligonucleotides, which are then degraded further into small acid-soluble oligonucleotides. The chain is Exodeoxyribonuclease 7 large subunit from Pseudomonas syringae pv. tomato (strain ATCC BAA-871 / DC3000).